A 481-amino-acid polypeptide reads, in one-letter code: ATP synthase subunit beta, chloroplastic (481 aa).

ATP is bound at residue 162–169; sequence GGAGVGKT.

It belongs to the ATPase alpha/beta chains family. As to quaternary structure, F-type ATPases have 2 components, CF(1) - the catalytic core - and CF(0) - the membrane proton channel. CF(1) has five subunits: alpha(3), beta(3), gamma(1), delta(1), epsilon(1). CF(0) has four main subunits: a(1), b(1), b'(1) and c(9-12).

It is found in the plastid. The protein localises to the chloroplast thylakoid membrane. The catalysed reaction is ATP + H2O + 4 H(+)(in) = ADP + phosphate + 5 H(+)(out). Functionally, produces ATP from ADP in the presence of a proton gradient across the membrane. The catalytic sites are hosted primarily by the beta subunits. This is ATP synthase subunit beta, chloroplastic from Oltmannsiellopsis viridis (Marine flagellate).